The chain runs to 61 residues: Small ribosomal subunit protein uS14B (61 aa).

4 residues coordinate Zn(2+): Cys24, Cys27, Cys40, and Cys43.

The protein belongs to the universal ribosomal protein uS14 family. Zinc-binding uS14 subfamily. As to quaternary structure, part of the 30S ribosomal subunit. Contacts proteins S3 and S10. Zn(2+) is required as a cofactor.

Its function is as follows. Binds 16S rRNA, required for the assembly of 30S particles and may also be responsible for determining the conformation of the 16S rRNA at the A site. The sequence is that of Small ribosomal subunit protein uS14B from Mycobacteroides abscessus (strain ATCC 19977 / DSM 44196 / CCUG 20993 / CIP 104536 / JCM 13569 / NCTC 13031 / TMC 1543 / L948) (Mycobacterium abscessus).